Here is a 212-residue protein sequence, read N- to C-terminus: Transcription antitermination protein NusB (212 aa).

2 disordered regions span residues 1 to 34 (MSDEQSTPASGRPPRQSRGGLTSTGARKAASKSN) and 169 to 212 (EHDR…QAAG). Low complexity predominate over residues 178–212 (APAQPAAKADTATDAVADAATDAAAADDAADQAAG).

It belongs to the NusB family.

Functionally, involved in transcription antitermination. Required for transcription of ribosomal RNA (rRNA) genes. Binds specifically to the boxA antiterminator sequence of the ribosomal RNA (rrn) operons. The sequence is that of Transcription antitermination protein NusB from Delftia acidovorans (strain DSM 14801 / SPH-1).